The sequence spans 396 residues: Inositol polyphosphate 1-phosphatase (396 aa).

Aspartate 54 is a Li(+) binding site. Residue glutamate 79 participates in Mg(2+) binding. Glutamate 80 is a binding site for Li(+). 2 residues coordinate Mg(2+): aspartate 153 and isoleucine 155. Residues aspartate 156, serine 157, threonine 158, serine 264, lysine 266, glycine 286, alanine 287, lysine 290, and threonine 308 each contribute to the 1D-myo-inositol 1,4-bisphosphate site. Aspartate 313 lines the Mg(2+) pocket. Phosphoserine is present on serine 314.

It belongs to the inositol monophosphatase superfamily. Monomer. Requires Mg(2+) as cofactor.

The enzyme catalyses 1D-myo-inositol 1,4-bisphosphate + H2O = 1D-myo-inositol 4-phosphate + phosphate. The catalysed reaction is 1D-myo-inositol 1,3,4-trisphosphate + H2O = 1D-myo-inositol 3,4-bisphosphate + phosphate. The protein operates within signal transduction; phosphatidylinositol signaling pathway. With respect to regulation, inhibited by Li(+). Its function is as follows. Mg(2+)-dependent phosphatase that catalyzes the hydrolysis of the 1-position phosphate from inositol 1,4-bisphosphate and inositol 1,3,4-trisphosphate and participates in inositol phosphate metabolism. The sequence is that of Inositol polyphosphate 1-phosphatase from Mus musculus (Mouse).